Reading from the N-terminus, the 283-residue chain is Polyamine aminopropyltransferase (283 aa).

The PABS domain maps to 5–238; it reads TTWIDEYHKG…GIWSWTFASS (234 aa). Residue Gln-32 coordinates S-methyl-5'-thioadenosine. Spermidine is bound by residues His-63 and Asp-87. Residues Glu-107 and 139-140 contribute to the S-methyl-5'-thioadenosine site; that span reads DG. Asp-158 (proton acceptor) is an active-site residue. 158–161 serves as a coordination point for spermidine; that stretch reads DCSD.

It belongs to the spermidine/spermine synthase family. In terms of assembly, homodimer or homotetramer.

It localises to the cytoplasm. It catalyses the reaction S-adenosyl 3-(methylsulfanyl)propylamine + putrescine = S-methyl-5'-thioadenosine + spermidine + H(+). The protein operates within amine and polyamine biosynthesis; spermidine biosynthesis; spermidine from putrescine: step 1/1. Its function is as follows. Catalyzes the irreversible transfer of a propylamine group from the amino donor S-adenosylmethioninamine (decarboxy-AdoMet) to putrescine (1,4-diaminobutane) to yield spermidine. In Prochlorococcus marinus (strain AS9601), this protein is Polyamine aminopropyltransferase.